The sequence spans 389 residues: Na(+)/H(+) antiporter NhaA (389 aa).

Helical transmembrane passes span alanine 14–leucine 34, leucine 59–valine 79, serine 95–phenylalanine 115, alanine 124–leucine 144, valine 154–phenylalanine 174, threonine 177–leucine 197, leucine 213–isoleucine 233, proline 257–glycine 277, isoleucine 292–valine 312, isoleucine 328–leucine 348, and leucine 363–valine 383.

It belongs to the NhaA Na(+)/H(+) (TC 2.A.33) antiporter family.

Its subcellular location is the cell inner membrane. The enzyme catalyses Na(+)(in) + 2 H(+)(out) = Na(+)(out) + 2 H(+)(in). Its function is as follows. Na(+)/H(+) antiporter that extrudes sodium in exchange for external protons. The protein is Na(+)/H(+) antiporter NhaA of Shewanella baltica (strain OS195).